Consider the following 513-residue polypeptide: Nitrogenase molybdenum-iron protein beta chain (513 aa).

Residues Cys70, Cys95, and Cys153 each contribute to the [8Fe-7S] cluster site.

Belongs to the NifD/NifK/NifE/NifN family. Tetramer of two alpha and two beta chains. Forms complex with the iron protein (nitrogenase component 2). [8Fe-7S] cluster serves as cofactor.

It catalyses the reaction N2 + 8 reduced [2Fe-2S]-[ferredoxin] + 16 ATP + 16 H2O = H2 + 8 oxidized [2Fe-2S]-[ferredoxin] + 2 NH4(+) + 16 ADP + 16 phosphate + 6 H(+). Functionally, this molybdenum-iron protein is part of the nitrogenase complex that catalyzes the key enzymatic reactions in nitrogen fixation. The sequence is that of Nitrogenase molybdenum-iron protein beta chain (nifK1) from Sinorhizobium fredii (strain NBRC 101917 / NGR234).